We begin with the raw amino-acid sequence, 72 residues long: Translation initiation factor IF-1 (72 aa).

Residues 1 to 72 form the S1-like domain; it reads MAKEDSIEMQ…TKGRIIFRAR (72 aa).

The protein belongs to the IF-1 family. Component of the 30S ribosomal translation pre-initiation complex which assembles on the 30S ribosome in the order IF-2 and IF-3, IF-1 and N-formylmethionyl-tRNA(fMet); mRNA recruitment can occur at any time during PIC assembly.

It is found in the cytoplasm. One of the essential components for the initiation of protein synthesis. Stabilizes the binding of IF-2 and IF-3 on the 30S subunit to which N-formylmethionyl-tRNA(fMet) subsequently binds. Helps modulate mRNA selection, yielding the 30S pre-initiation complex (PIC). Upon addition of the 50S ribosomal subunit IF-1, IF-2 and IF-3 are released leaving the mature 70S translation initiation complex. This is Translation initiation factor IF-1 from Actinobacillus succinogenes (strain ATCC 55618 / DSM 22257 / CCUG 43843 / 130Z).